The chain runs to 521 residues: GMP synthase [glutamine-hydrolyzing] (521 aa).

Residues 5–197 (KILILDFGSQ…VLDICGAQPG (193 aa)) enclose the Glutamine amidotransferase type-1 domain. Catalysis depends on C81, which acts as the Nucleophile. Catalysis depends on residues H171 and E173. Residues 198–390 (WTMPNYIEEA…LGLPREMVYR (193 aa)) enclose the GMPS ATP-PPase domain. 225-231 (SGGVDSS) is an ATP binding site.

Homodimer.

It catalyses the reaction XMP + L-glutamine + ATP + H2O = GMP + L-glutamate + AMP + diphosphate + 2 H(+). It participates in purine metabolism; GMP biosynthesis; GMP from XMP (L-Gln route): step 1/1. Functionally, catalyzes the synthesis of GMP from XMP. The polypeptide is GMP synthase [glutamine-hydrolyzing] (Neisseria gonorrhoeae (strain ATCC 700825 / FA 1090)).